The chain runs to 492 residues: Dynein regulatory complex subunit 2 (492 aa).

Coiled-coil stretches lie at residues 16–95 (LTEE…FERV), 256–318 (VQSA…AAQA), and 373–401 (LSEE…HDYS).

The protein belongs to the DRC2 family. As to quaternary structure, component of the nexin-dynein regulatory complex (N-DRC).

It localises to the cytoplasm. The protein localises to the cytoskeleton. It is found in the flagellum basal body. The protein resides in the cell projection. Its subcellular location is the cilium. It localises to the flagellum. The protein localises to the flagellum axoneme. Component of the nexin-dynein regulatory complex (N-DRC), a key regulator of ciliary/flagellar motility which maintains the alignment and integrity of the distal axoneme and regulates microtubule sliding in motile axonemes. Plays a critical role in the assembly of N-DRC and also stabilizes the assembly of multiple inner dynein arms and radial spokes. Coassembles with DRC1 to form a central scaffold needed for assembly of the N-DRC and its attachment to the outer doublet microtubules. This chain is Dynein regulatory complex subunit 2 (ccdc65), found in Danio rerio (Zebrafish).